The primary structure comprises 157 residues: Endoribonuclease YbeY (157 aa).

Residues His-113, His-117, and His-123 each contribute to the Zn(2+) site.

This sequence belongs to the endoribonuclease YbeY family. Zn(2+) is required as a cofactor.

It localises to the cytoplasm. Functionally, single strand-specific metallo-endoribonuclease involved in late-stage 70S ribosome quality control and in maturation of the 3' terminus of the 16S rRNA. The chain is Endoribonuclease YbeY from Ehrlichia ruminantium (strain Welgevonden).